We begin with the raw amino-acid sequence, 196 residues long: Superantigen-like protein 11 (196 aa).

Residues 65 to 167 (LDVFVVREGS…RVTMKNGDFY (103 aa)) are sialyl Lewis X-binding.

Belongs to the staphylococcal/streptococcal toxin family. In terms of assembly, homodimer (via its C-terminal domain). Interacts with host FCAR and SELPLG (via sialyl Lewis X).

It localises to the secreted. Functionally, secreted protein that plays a role in the inhibition of host immune system. Targets myeloid cells such as monocytes or granulocytes through binding with sialyllactosamine-containing glycoproteins. Prevents initial rolling of neutrophils toward the site of infection by interacting with host SELPLG. Disrupts neutrophil motility by induction of cell adhesion via interacting with glycans but independently of SELPLG. The protein is Superantigen-like protein 11 of Staphylococcus aureus.